The following is a 193-amino-acid chain: dCTP deaminase (193 aa).

DCTP is bound by residues 110–115, aspartate 128, 136–138, tyrosine 171, lysine 178, and glutamine 182; these read RSSLAR and VLE. Glutamate 138 functions as the Proton donor/acceptor in the catalytic mechanism.

This sequence belongs to the dCTP deaminase family. Homotrimer.

It catalyses the reaction dCTP + H2O + H(+) = dUTP + NH4(+). It functions in the pathway pyrimidine metabolism; dUMP biosynthesis; dUMP from dCTP (dUTP route): step 1/2. Catalyzes the deamination of dCTP to dUTP. This is dCTP deaminase from Tolumonas auensis (strain DSM 9187 / NBRC 110442 / TA 4).